Here is a 382-residue protein sequence, read N- to C-terminus: Cytochrome b (382 aa).

4 helical membrane-spanning segments follow: residues 36 to 56 (FGSLLALCLMIQILTGLFLTM), 80 to 101 (WLIRTIHANGASFFFICIYLHI), 116 to 136 (WFIGVIILFMLMATAFMGYVL), and 181 to 201 (FYTFHFLLPFIILMLTMIHLL). His86 and His100 together coordinate heme b. Heme b contacts are provided by His185 and His199. His204 contacts a ubiquinone. 4 helical membrane-spanning segments follow: residues 229–249 (YKDLIGFLILMMLLLMLTLSN), 291–311 (LGGVIALVMSILILIILPLTF), 323–343 (INQFMFWIFVMMVILLTWIGA), and 350–370 (YIITGQLLTILYFLYFILNPL).

This sequence belongs to the cytochrome b family. In terms of assembly, the main subunits of complex b-c1 are: cytochrome b, cytochrome c1 and the Rieske protein. Heme b serves as cofactor.

It is found in the mitochondrion inner membrane. Component of the ubiquinol-cytochrome c reductase complex (complex III or cytochrome b-c1 complex) that is part of the mitochondrial respiratory chain. The b-c1 complex mediates electron transfer from ubiquinol to cytochrome c. Contributes to the generation of a proton gradient across the mitochondrial membrane that is then used for ATP synthesis. The polypeptide is Cytochrome b (MT-CYB) (Samia ricini (Indian eri silkmoth)).